The chain runs to 367 residues: Cobalt-precorrin-5B C(1)-methyltransferase (367 aa).

Belongs to the CbiD family.

It catalyses the reaction Co-precorrin-5B + S-adenosyl-L-methionine = Co-precorrin-6A + S-adenosyl-L-homocysteine. Its pathway is cofactor biosynthesis; adenosylcobalamin biosynthesis; cob(II)yrinate a,c-diamide from sirohydrochlorin (anaerobic route): step 6/10. Catalyzes the methylation of C-1 in cobalt-precorrin-5B to form cobalt-precorrin-6A. This is Cobalt-precorrin-5B C(1)-methyltransferase from Leptospira interrogans serogroup Icterohaemorrhagiae serovar Lai (strain 56601).